Consider the following 146-residue polypeptide: Hemoglobin subunit beta (146 aa).

The 145-residue stretch at 2–146 (PFSAHEEKLI…VAAALSAEYH (145 aa)) folds into the Globin domain. Residues His63 and His92 each contribute to the heme b site.

The protein belongs to the globin family. In terms of assembly, heterotetramer of two alpha chains and two beta chains. As to expression, red blood cells.

Its function is as follows. Involved in oxygen transport from the lung to the various peripheral tissues. This is Hemoglobin subunit beta (HBB) from Caiman crocodilus (Spectacled caiman).